A 180-amino-acid chain; its full sequence is Putative peroxiredoxin YkuU (180 aa).

A Thioredoxin domain is found at 4–165 (RMVGKQAPRF…TLRVLQALQT (162 aa)). The active-site Cysteine sulfenic acid (-SOH) intermediate is the Cys52.

It belongs to the peroxiredoxin family. AhpC/Prx1 subfamily. As to quaternary structure, homodimer; disulfide-linked, upon oxidation.

The protein localises to the cytoplasm. The catalysed reaction is a hydroperoxide + [protein]-dithiol = [protein]-disulfide + an alcohol + H2O. Its function is as follows. Thiol-specific peroxidase that catalyzes the reduction of hydrogen peroxide and organic hydroperoxides to water and alcohols, respectively. Plays a role in cell protection against oxidative stress by detoxifying peroxides. The chain is Putative peroxiredoxin YkuU (ykuU) from Bacillus subtilis (strain 168).